A 474-amino-acid polypeptide reads, in one-letter code: Transcription termination factor Rho (474 aa).

The interval 1 to 60 (MTEELDNTPSPAGDIPQETLPKPLPAPEETAGEQPAAAPEENRGNAVREEEEAAPVLEQI) is disordered. The Rho RNA-BD domain occupies 107–182 (EVVVSGVMEQ…ASVISVEDIP (76 aa)). ATP is bound by residues 226 to 231 (GKGQRG), 238 to 243 (RGGKTV), and arginine 269.

It belongs to the Rho family. In terms of assembly, homohexamer. The homohexamer assembles into an open ring structure.

Its function is as follows. Facilitates transcription termination by a mechanism that involves Rho binding to the nascent RNA, activation of Rho's RNA-dependent ATPase activity, and release of the mRNA from the DNA template. This chain is Transcription termination factor Rho, found in Akkermansia muciniphila (strain ATCC BAA-835 / DSM 22959 / JCM 33894 / BCRC 81048 / CCUG 64013 / CIP 107961 / Muc).